We begin with the raw amino-acid sequence, 326 residues long: Biotin synthase (326 aa).

One can recognise a Radical SAM core domain in the interval 47-274 (NEVQVSSLLS…ASRVRLSAGR (228 aa)). C62, C66, and C69 together coordinate [4Fe-4S] cluster. [2Fe-2S] cluster is bound by residues C106, C137, C197, and R269.

This sequence belongs to the radical SAM superfamily. Biotin synthase family. As to quaternary structure, homodimer. [4Fe-4S] cluster is required as a cofactor. Requires [2Fe-2S] cluster as cofactor.

It catalyses the reaction (4R,5S)-dethiobiotin + (sulfur carrier)-SH + 2 reduced [2Fe-2S]-[ferredoxin] + 2 S-adenosyl-L-methionine = (sulfur carrier)-H + biotin + 2 5'-deoxyadenosine + 2 L-methionine + 2 oxidized [2Fe-2S]-[ferredoxin]. The protein operates within cofactor biosynthesis; biotin biosynthesis; biotin from 7,8-diaminononanoate: step 2/2. Catalyzes the conversion of dethiobiotin (DTB) to biotin by the insertion of a sulfur atom into dethiobiotin via a radical-based mechanism. In Methylococcus capsulatus (strain ATCC 33009 / NCIMB 11132 / Bath), this protein is Biotin synthase.